The primary structure comprises 664 residues: MARVLLTCFFILISSHLGKSSGVFELKVLSFTSTSSVCKGSSDCQIFFRVCLKHSQALILPEPPCTYGTGMSEILSADSISSSAYISVPFNFKWPGIVSLIIETWNAETSDQSTENNNNMISRLATKRRLAISEDWSQDVHLGRQSQLRFSYRVVCDEFYHGEECSDFCRPRNDTFGHFNCDAAGNRICLPGWKGDYCTEPICLSGCSEENGYCEAPGECKCRIGWEGPLCDECTRHPGCLHGTCNQPFQCTCKEGWGGLFCNEDLNFCTNHKPCRNDATCTNTGQGSYTCICKPGFSGKNCEIETNECDSNPCKNGGSCNDQENDYTCTCPQGFYGKNCEVSAMTCADGPCFNGGTCMEKGSGSYSCRCPPGYMGSNCEKKIDRCSSDPCANGGQCLDLGNKATCRCRPGFTGSRCETNIDDCSSNPCQNAGTCVDGINGYTCTCTLGFSGKDCRVRSDACSFMPCQNGGTCYTHFSGPVCQCPAGFMGTQCEYKQKPTPVNSPALPAALIVSFTLGLITLTLVICAAIVVLRQMRQNHKASSTTVRNNLDSVNNRISLSPTSPLGREKEAFLIPGGPFKVSNKDMALRSTSVDTHSSDKSNYKQKMVDYNLSIDEKHTNNKLEKNSESTLLVPPLNYPKEGVYHPVYIIPEHIEQRVFATEV.

The signal sequence occupies residues 1-20 (MARVLLTCFFILISSHLGKS). Residues 21 to 511 (SGVFELKVLS…VNSPALPAAL (491 aa)) lie on the Extracellular side of the membrane. Positions 154–198 (VVCDEFYHGEECSDFCRPRNDTFGHFNCDAAGNRICLPGWKGDYC) constitute a DSL domain. Cystine bridges form between C156–C165, C169–C181, C189–C198, C203–C214, C207–C220, C222–C231, C234–C245, C240–C251, C253–C262, C269–C281, C275–C291, C293–C302, C309–C320, C314–C329, C331–C340, C347–C358, C352–C368, C370–C379, C386–C397, C391–C406, C408–C417, C424–C435, C429–C444, C446–C455, C462–C473, C467–C482, and C484–C493. An N-linked (GlcNAc...) asparagine glycan is attached at N173. EGF-like domains are found at residues 199–232 (TEPI…PLCD), 233–263 (ECTR…LFCN), and 265–303 (DLNF…KNCE). In terms of domain architecture, EGF-like 4; calcium-binding spans 305 to 341 (ETNECDSNPCKNGGSCNDQENDYTCTCPQGFYGKNCE). EGF-like domains are found at residues 343–380 (SAMT…SNCE) and 382–418 (KIDR…SRCE). In terms of domain architecture, EGF-like 7; calcium-binding spans 420–456 (NIDDCSSNPCQNAGTCVDGINGYTCTCTLGFSGKDCR). Positions 458-494 (RSDACSFMPCQNGGTCYTHFSGPVCQCPAGFMGTQCE) constitute an EGF-like 8 domain. The chain crosses the membrane as a helical span at residues 512–532 (IVSFTLGLITLTLVICAAIVV). Residues 533 to 664 (LRQMRQNHKA…IEQRVFATEV (132 aa)) are Cytoplasmic-facing.

Post-translationally, ubiquitinated by mib, leading to its endocytosis and subsequent degradation. In terms of tissue distribution, strongly expressed in the early retina, where it precedes other delta proteins. Also expressed in cranial ganglia, in sensory epithelia including ear and lateral line and in scattered epidermal cells. In the mesoderm, expression is visible by 50% epiboly; it is expressed subsequently in the tail bud, in stripes in the presomitic mesoderm and in the posterior half of each somite. Also expressed in notochord, blood vessels and pronephros. In contrast to other delta proteins, it is not expressed in the majority of nascent primary neurons. In somites, it marks the posterior part of each formed somite, while deltaD (dld) marks the anterior part.

It is found in the membrane. Its function is as follows. Acts as a ligand for Notch receptors and is involved in somitogenesis. Can activate Notch receptors. Required in somite segmentation to keep the oscillations of neighboring presomitic mesoderm cells synchronized. The sequence is that of Delta-like protein C (dlc) from Danio rerio (Zebrafish).